A 222-amino-acid polypeptide reads, in one-letter code: Probable elongation factor 1-beta (222 aa).

A disordered region spans residues 90–111 (KPAADDDDDVDLFGSDDEEDEE). Residues 94–111 (DDDDDVDLFGSDDEEDEE) show a composition bias toward acidic residues. Position 104 is a phosphoserine (serine 104).

This sequence belongs to the EF-1-beta/EF-1-delta family. EF-1 is composed of 4 subunits: alpha, beta, beta' and gamma. In terms of processing, phosphorylation affects the GDP/GTP exchange rate.

EF-1-beta and EF-1-delta stimulate the exchange of GDP bound to EF-1-alpha to GTP. This chain is Probable elongation factor 1-beta, found in Drosophila melanogaster (Fruit fly).